A 434-amino-acid polypeptide reads, in one-letter code: Glutamyl-tRNA reductase 2 (434 aa).

Substrate is bound by residues threonine 57–arginine 60, serine 113, aspartate 118–glutamate 120, and glutamine 124. Cysteine 58 acts as the Nucleophile in catalysis. Glycine 193–glycine 198 is a binding site for NADP(+).

The protein belongs to the glutamyl-tRNA reductase family. As to quaternary structure, homodimer.

The enzyme catalyses (S)-4-amino-5-oxopentanoate + tRNA(Glu) + NADP(+) = L-glutamyl-tRNA(Glu) + NADPH + H(+). Its pathway is porphyrin-containing compound metabolism; protoporphyrin-IX biosynthesis; 5-aminolevulinate from L-glutamyl-tRNA(Glu): step 1/2. Functionally, catalyzes the NADPH-dependent reduction of glutamyl-tRNA(Glu) to glutamate 1-semialdehyde (GSA). The sequence is that of Glutamyl-tRNA reductase 2 from Flavobacterium johnsoniae (strain ATCC 17061 / DSM 2064 / JCM 8514 / BCRC 14874 / CCUG 350202 / NBRC 14942 / NCIMB 11054 / UW101) (Cytophaga johnsonae).